The chain runs to 81 residues: Putative membrane protein insertion efficiency factor (81 aa).

Belongs to the UPF0161 family.

Its subcellular location is the cell inner membrane. Its function is as follows. Could be involved in insertion of integral membrane proteins into the membrane. The sequence is that of Putative membrane protein insertion efficiency factor from Legionella pneumophila (strain Lens).